The following is a 170-amino-acid chain: Ribosome maturation factor RimP (170 aa).

The protein belongs to the RimP family.

The protein localises to the cytoplasm. Its function is as follows. Required for maturation of 30S ribosomal subunits. The sequence is that of Ribosome maturation factor RimP from Chlorobaculum parvum (strain DSM 263 / NCIMB 8327) (Chlorobium vibrioforme subsp. thiosulfatophilum).